The sequence spans 68 residues: Large ribosomal subunit protein uL29 (68 aa).

The protein belongs to the universal ribosomal protein uL29 family.

This is Large ribosomal subunit protein uL29 from Roseobacter denitrificans (strain ATCC 33942 / OCh 114) (Erythrobacter sp. (strain OCh 114)).